We begin with the raw amino-acid sequence, 147 residues long: Hemoglobin subunit epsilon (147 aa).

The Globin domain maps to 3–147 (HFTAEEKNAI…VANALAHKYH (145 aa)). Residue serine 51 is modified to Phosphoserine. Histidine 64 and histidine 93 together coordinate heme b.

This sequence belongs to the globin family. In terms of assembly, heterotetramer of two alpha chains and two epsilon chains in early embryonic hemoglobin Gower-2; two zeta chains and two epsilon chains in early embryonic hemoglobin Gower-1. As to expression, red blood cells.

Functionally, the epsilon chain is a beta-type chain of early mammalian embryonic hemoglobin. This chain is Hemoglobin subunit epsilon (HBE1), found in Sminthopsis crassicaudata (Fat-tailed dunnart).